Here is an 88-residue protein sequence, read N- to C-terminus: DNA-directed RNA polymerase subunit omega (88 aa).

The protein belongs to the RNA polymerase subunit omega family. The RNAP catalytic core consists of 2 alpha, 1 beta, 1 beta' and 1 omega subunit. When a sigma factor is associated with the core the holoenzyme is formed, which can initiate transcription.

The enzyme catalyses RNA(n) + a ribonucleoside 5'-triphosphate = RNA(n+1) + diphosphate. In terms of biological role, promotes RNA polymerase assembly. Latches the N- and C-terminal regions of the beta' subunit thereby facilitating its interaction with the beta and alpha subunits. The polypeptide is DNA-directed RNA polymerase subunit omega (Anaeromyxobacter sp. (strain Fw109-5)).